The sequence spans 293 residues: Bifunctional protein FolD (293 aa).

Residues 164–166 (GRS), Ser-193, and Thr-234 each bind NADP(+).

It belongs to the tetrahydrofolate dehydrogenase/cyclohydrolase family. As to quaternary structure, homodimer.

It catalyses the reaction (6R)-5,10-methylene-5,6,7,8-tetrahydrofolate + NADP(+) = (6R)-5,10-methenyltetrahydrofolate + NADPH. The enzyme catalyses (6R)-5,10-methenyltetrahydrofolate + H2O = (6R)-10-formyltetrahydrofolate + H(+). The protein operates within one-carbon metabolism; tetrahydrofolate interconversion. Catalyzes the oxidation of 5,10-methylenetetrahydrofolate to 5,10-methenyltetrahydrofolate and then the hydrolysis of 5,10-methenyltetrahydrofolate to 10-formyltetrahydrofolate. In Azobacteroides pseudotrichonymphae genomovar. CFP2, this protein is Bifunctional protein FolD.